We begin with the raw amino-acid sequence, 514 residues long: Lysine--tRNA ligase (514 aa).

Residues glutamate 422 and glutamate 429 each contribute to the Mg(2+) site.

Belongs to the class-II aminoacyl-tRNA synthetase family. Homodimer. Mg(2+) serves as cofactor.

The protein resides in the cytoplasm. The enzyme catalyses tRNA(Lys) + L-lysine + ATP = L-lysyl-tRNA(Lys) + AMP + diphosphate. This Psychrobacter arcticus (strain DSM 17307 / VKM B-2377 / 273-4) protein is Lysine--tRNA ligase.